The chain runs to 132 residues: Pollen allergen Phl p 6 (132 aa).

A signal peptide spans 1 to 22 (MVAMFLAVAVVLGLATSPTAEG).

The protein belongs to the Poa p IX/Phl p VI allergen family.

In Phleum pratense (Common timothy), this protein is Pollen allergen Phl p 6 (PHLPVI).